A 139-amino-acid chain; its full sequence is ATP synthase epsilon chain (139 aa).

This sequence belongs to the ATPase epsilon chain family. As to quaternary structure, F-type ATPases have 2 components, CF(1) - the catalytic core - and CF(0) - the membrane proton channel. CF(1) has five subunits: alpha(3), beta(3), gamma(1), delta(1), epsilon(1). CF(0) has three main subunits: a, b and c.

The protein localises to the cell membrane. Its function is as follows. Produces ATP from ADP in the presence of a proton gradient across the membrane. This Streptococcus pneumoniae serotype 2 (strain D39 / NCTC 7466) protein is ATP synthase epsilon chain.